The sequence spans 366 residues: Chorismate synthase (366 aa).

Residue Arg-48 coordinates NADP(+). FMN is bound by residues Arg-125 to Ser-127, Gly-285, Lys-300 to Ser-304, and Arg-327.

Belongs to the chorismate synthase family. FMNH2 serves as cofactor.

The enzyme catalyses 5-O-(1-carboxyvinyl)-3-phosphoshikimate = chorismate + phosphate. It participates in metabolic intermediate biosynthesis; chorismate biosynthesis; chorismate from D-erythrose 4-phosphate and phosphoenolpyruvate: step 7/7. Catalyzes the anti-1,4-elimination of the C-3 phosphate and the C-6 proR hydrogen from 5-enolpyruvylshikimate-3-phosphate (EPSP) to yield chorismate, which is the branch point compound that serves as the starting substrate for the three terminal pathways of aromatic amino acid biosynthesis. This reaction introduces a second double bond into the aromatic ring system. This chain is Chorismate synthase, found in Methanococcoides burtonii (strain DSM 6242 / NBRC 107633 / OCM 468 / ACE-M).